We begin with the raw amino-acid sequence, 183 residues long: Large ribosomal subunit protein uL22 (183 aa).

It belongs to the universal ribosomal protein uL22 family.

This Podocoryna carnea (Hydrozoan) protein is Large ribosomal subunit protein uL22 (RPL17).